Reading from the N-terminus, the 612-residue chain is Poly(A) RNA polymerase, mitochondrial (612 aa).

The N-terminal 57 residues, M1 to Q57, are a transit peptide targeting the mitochondrion. Residues Y83–E89 and G228–C229 each bind ATP. Residues D230 and D232 each coordinate Mg(2+). The PAP-associated domain occupies S427 to S463. 2 disordered regions span residues A555 to S574 and S588 to R612.

The protein belongs to the DNA polymerase type-B-like family. The cofactor is Mg(2+). Mn(2+) is required as a cofactor.

Its subcellular location is the mitochondrion. The enzyme catalyses RNA(n) + ATP = RNA(n)-3'-adenine ribonucleotide + diphosphate. In terms of biological role, polymerase that creates the 3' poly(A) tail of mitochondrial transcripts. This is not required for transcript stability or translation but may maintain mRNA integrity by protecting 3' termini from degradation. The protein is Poly(A) RNA polymerase, mitochondrial of Drosophila melanogaster (Fruit fly).